The primary structure comprises 101 residues: Small ribosomal subunit protein uS14 (101 aa).

The protein belongs to the universal ribosomal protein uS14 family. As to quaternary structure, part of the 30S ribosomal subunit. Contacts proteins S3 and S10.

Its function is as follows. Binds 16S rRNA, required for the assembly of 30S particles and may also be responsible for determining the conformation of the 16S rRNA at the A site. This is Small ribosomal subunit protein uS14 from Aeromonas salmonicida (strain A449).